The sequence spans 141 residues: Nucleoside diphosphate kinase (141 aa).

Lys11, Phe59, Arg87, Thr93, Arg104, and Asn114 together coordinate ATP. The active-site Pros-phosphohistidine intermediate is His117.

It belongs to the NDK family. In terms of assembly, homotetramer. The cofactor is Mg(2+).

Its subcellular location is the cytoplasm. It catalyses the reaction a 2'-deoxyribonucleoside 5'-diphosphate + ATP = a 2'-deoxyribonucleoside 5'-triphosphate + ADP. The catalysed reaction is a ribonucleoside 5'-diphosphate + ATP = a ribonucleoside 5'-triphosphate + ADP. Major role in the synthesis of nucleoside triphosphates other than ATP. The ATP gamma phosphate is transferred to the NDP beta phosphate via a ping-pong mechanism, using a phosphorylated active-site intermediate. This Cellvibrio japonicus (strain Ueda107) (Pseudomonas fluorescens subsp. cellulosa) protein is Nucleoside diphosphate kinase.